The primary structure comprises 222 residues: Pyridoxine/pyridoxamine 5'-phosphate oxidase (222 aa).

Residues 11–14 (RVEY) and lysine 79 each bind substrate. Residues 74–79 (RTVLCK), 89–90 (YT), lysine 96, and glutamine 118 each bind FMN. Residues tyrosine 136, arginine 140, and serine 144 each contribute to the substrate site. Residues 153–154 (QS) and tryptophan 199 each bind FMN. 205 to 207 (RVH) contributes to the substrate binding site. Arginine 209 provides a ligand contact to FMN.

Belongs to the pyridoxamine 5'-phosphate oxidase family. In terms of assembly, homodimer. The cofactor is FMN.

It carries out the reaction pyridoxamine 5'-phosphate + O2 + H2O = pyridoxal 5'-phosphate + H2O2 + NH4(+). The catalysed reaction is pyridoxine 5'-phosphate + O2 = pyridoxal 5'-phosphate + H2O2. It participates in cofactor metabolism; pyridoxal 5'-phosphate salvage; pyridoxal 5'-phosphate from pyridoxamine 5'-phosphate: step 1/1. The protein operates within cofactor metabolism; pyridoxal 5'-phosphate salvage; pyridoxal 5'-phosphate from pyridoxine 5'-phosphate: step 1/1. Catalyzes the oxidation of either pyridoxine 5'-phosphate (PNP) or pyridoxamine 5'-phosphate (PMP) into pyridoxal 5'-phosphate (PLP). This chain is Pyridoxine/pyridoxamine 5'-phosphate oxidase, found in Mycolicibacterium vanbaalenii (strain DSM 7251 / JCM 13017 / BCRC 16820 / KCTC 9966 / NRRL B-24157 / PYR-1) (Mycobacterium vanbaalenii).